A 571-amino-acid chain; its full sequence is MEVERIALKYALINAIEHGGKANPKAVIGKVLGENPELRSKAREIVPIINKVVEEVNSLSLDEQKAKLMEIYPEYFEKKEEKKEEKKGLPPLPKAEKGKVVTRFAPNPDGAFHLGNARAAILSYEYAKMYGGKFILRFDDTDPKVKRPEPIFYEMIIEDLEWLGIKPDEIVYASDRLELYYKYAEELIKMGKAYVCTCKPEKFRELRDKGIPCPHRDEPVEVQLERWRKMLNGEYKEGEAVVRIKTDLNHPNPAVRDWPALRIVDNPNHPRAGNKYRVWPLYNFASAIDDHELGVTHIFRGQEHAENETRQRYIYEYFGWEYPVTVHHGRLSIEGVILSKSKTRKGIEEGKYLGWDDPRLGTIRALRRRGILPEAIKELIIEVGLKKSDATVSWDNLAAINRKLVDPIANRYFFVADPVPMEVEGAPEFIAKIPLHPDHPERGTRELRFTPGKPIYVSKDDLDLLKPGSFVRLKDLFNVEIVEVGEKIKAKFHSFEYEIARKNKWRMIHWVPEGRPCEVIIPEGDELIVRKGLLEKDANVKAGEIVQFERFGFVRIDKIEGEKVVAIYAHK.

The short motif at 106–116 is the 'HIGH' region element; the sequence is PNPDGAFHLGN.

The protein belongs to the class-I aminoacyl-tRNA synthetase family. Glutamate--tRNA ligase type 2 subfamily.

It localises to the cytoplasm. It carries out the reaction tRNA(Glu) + L-glutamate + ATP = L-glutamyl-tRNA(Glu) + AMP + diphosphate. In terms of biological role, catalyzes the attachment of glutamate to tRNA(Glu) in a two-step reaction: glutamate is first activated by ATP to form Glu-AMP and then transferred to the acceptor end of tRNA(Glu). The protein is Glutamate--tRNA ligase of Pyrococcus abyssi (strain GE5 / Orsay).